A 1784-amino-acid chain; its full sequence is Protein mel-28 (1784 aa).

Positions Met-1–Val-956 are required for nuclear envelope and kinetochore localization. Residues Gly-566–Glu-778 are required for association with mitotic chromosomes. The important for nuclear localization stretch occupies residues Ala-846–Gly-1071. 2 disordered regions span residues Lys-945 to Ile-994 and Glu-1115 to Gln-1784. The segment covering Gly-1126–Glu-1149 has biased composition (basic and acidic residues). Composition is skewed to acidic residues over residues Leu-1222 to Trp-1232 and Val-1266 to Gln-1278. The segment at Phe-1239–Leu-1601 is chromatin binding. Residues Gln-1279–Glu-1293 are compositionally biased toward basic and acidic residues. The span at Glu-1297 to Glu-1306 shows a compositional bias: low complexity. Residues Glu-1321–Thr-1336 are compositionally biased toward acidic residues. Residues Ala-1337–Pro-1351 are compositionally biased toward basic and acidic residues. The segment covering Ser-1352–Gln-1366 has biased composition (polar residues). The span at Val-1367–Pro-1382 shows a compositional bias: basic and acidic residues. The segment covering Ser-1383 to Glu-1398 has biased composition (polar residues). The span at Lys-1428–Pro-1444 shows a compositional bias: basic and acidic residues. Polar residues predominate over residues Ser-1445 to Ala-1459. Positions Ala-1533 to Thr-1546 are enriched in low complexity. Positions Val-1566–Glu-1576 are enriched in acidic residues. Polar residues predominate over residues Ser-1581 to Arg-1606. An important for nuclear localization region spans residues Leu-1601–Gln-1784. Residues Thr-1630–Gly-1642 constitute a DNA-binding region (a.T hook 1). Positions Thr-1630–Gln-1784 are required for chromosome segregation, nuclear growth, nucleoplasmic accumulation and cell cycle timing, but not required for nuclear envelope and kinetochore localization. Residues Ala-1716–Val-1735 are compositionally biased toward polar residues. A DNA-binding region (a.T hook 2) is located at residues Lys-1746–Glu-1758.

Ubiquitously expressed (at protein level).

It localises to the nucleus. The protein localises to the nucleoplasm. Its subcellular location is the nucleus envelope. It is found in the nucleus inner membrane. The protein resides in the nuclear pore complex. It localises to the chromosome. The protein localises to the centromere. Its subcellular location is the kinetochore. Functionally, nuclear envelope protein which has essential roles in assembly of nuclear pore complexes and in chromatin maintenance during the cell cycle. Appears to be a stable structural component of the nuclear envelope during interphase. In dividing cells, localizes to kinetochores during early stages of mitosis and then to chromatin during late mitosis. Important for several mitotic processes including chromosome condensation, kinetochore assembly, chromosome segregation and cell-cycle timing. In postmitotic cells, plays a role in the early steps of nuclear pore complex assembly by recruiting the nucleoporins npp-10 and npp-5 to chromatin. Also involved in meiotic chromosome segregation. May function downstream of the Ran GTPase signaling pathway. The sequence is that of Protein mel-28 from Caenorhabditis elegans.